We begin with the raw amino-acid sequence, 345 residues long: UPF0324 membrane protein CTC_01844 (345 aa).

The next 10 membrane-spanning stretches (helical) occupy residues 7-24 (YSVG…SGFI), 28-50 (IPYR…NPIV), 70-87 (LAII…VLEV), 91-113 (SLIV…GKLF), 120-142 (SGLI…SPVI), 152-174 (AISA…GKYF), 181-203 (YGLW…YAFS), 209-231 (FSVI…FSYI), 261-283 (IFPW…IIPN), and 316-338 (SGFA…SFLV).

This sequence belongs to the UPF0324 family.

It localises to the cell membrane. The sequence is that of UPF0324 membrane protein CTC_01844 from Clostridium tetani (strain Massachusetts / E88).